The chain runs to 347 residues: S-adenosylmethionine:tRNA ribosyltransferase-isomerase (347 aa).

It belongs to the QueA family. In terms of assembly, monomer.

The protein resides in the cytoplasm. It carries out the reaction 7-aminomethyl-7-carbaguanosine(34) in tRNA + S-adenosyl-L-methionine = epoxyqueuosine(34) in tRNA + adenine + L-methionine + 2 H(+). It functions in the pathway tRNA modification; tRNA-queuosine biosynthesis. In terms of biological role, transfers and isomerizes the ribose moiety from AdoMet to the 7-aminomethyl group of 7-deazaguanine (preQ1-tRNA) to give epoxyqueuosine (oQ-tRNA). The polypeptide is S-adenosylmethionine:tRNA ribosyltransferase-isomerase (Pseudomonas aeruginosa (strain UCBPP-PA14)).